The chain runs to 228 residues: 2-C-methyl-D-erythritol 4-phosphate cytidylyltransferase (228 aa).

Belongs to the IspD/TarI cytidylyltransferase family. IspD subfamily.

It catalyses the reaction 2-C-methyl-D-erythritol 4-phosphate + CTP + H(+) = 4-CDP-2-C-methyl-D-erythritol + diphosphate. It participates in isoprenoid biosynthesis; isopentenyl diphosphate biosynthesis via DXP pathway; isopentenyl diphosphate from 1-deoxy-D-xylulose 5-phosphate: step 2/6. Functionally, catalyzes the formation of 4-diphosphocytidyl-2-C-methyl-D-erythritol from CTP and 2-C-methyl-D-erythritol 4-phosphate (MEP). In Geobacillus thermodenitrificans (strain NG80-2), this protein is 2-C-methyl-D-erythritol 4-phosphate cytidylyltransferase.